We begin with the raw amino-acid sequence, 255 residues long: Acid phosphatase 1 (255 aa).

Residues 1 to 15 (MRIFVFLVLLTVAIG) form the signal peptide. Residue asparagine 142 is glycosylated (N-linked (GlcNAc...) asparagine).

Belongs to the APS1/VSP family.

The catalysed reaction is a phosphate monoester + H2O = an alcohol + phosphate. This Solanum lycopersicum (Tomato) protein is Acid phosphatase 1 (APS1).